Reading from the N-terminus, the 530-residue chain is Histone-arginine methyltransferase CARMER (530 aa).

The SAM-dependent MTase PRMT-type domain maps to 141–450 (ASQYFQFYGY…QSYDVTIDLH (310 aa)). The S-adenosyl-L-methionine site is built by Q154, R163, G187, E209, E238, and T266. Asymmetric dimethylarginine; by autocatalysis is present on R501.

Belongs to the class I-like SAM-binding methyltransferase superfamily. Protein arginine N-methyltransferase family. Homodimer. Post-translationally, the dimethylated protein is the major form.

The protein resides in the cytoplasm. The protein localises to the nucleus. It carries out the reaction L-arginyl-[protein] + 2 S-adenosyl-L-methionine = N(omega),N(omega)-dimethyl-L-arginyl-[protein] + 2 S-adenosyl-L-homocysteine + 2 H(+). Its function is as follows. Methylates (mono- and asymmetric dimethylation) the guanidino nitrogens of arginyl residues in proteins. May methylate histone H3 at 'Arg-17' and activate transcription via chromatin remodeling. The protein is Histone-arginine methyltransferase CARMER (Art4) of Drosophila sechellia (Fruit fly).